A 1089-amino-acid polypeptide reads, in one-letter code: Nonsense-mediated mRNA decay protein 2 (1089 aa).

The tract at residues 819–951 is disordered; sequence DRVKGSSASI…DLDADRDIEM (133 aa). Composition is skewed to acidic residues over residues 841–866 and 885–943; these read ITED…EDAE and ESED…GGDL.

It is found in the cytoplasm. Involved in nonsense-mediated decay of mRNAs containing premature stop codons. It interacts, via its C-terminus, with NAM7/UPF1. Could be involved in determining the efficiency of translational termination or reinitiation or factors involved in the initial assembly of an initiation- and termination-competent mRNP. The chain is Nonsense-mediated mRNA decay protein 2 (NMD2) from Saccharomyces cerevisiae (strain ATCC 204508 / S288c) (Baker's yeast).